The sequence spans 325 residues: Putative metal ion transporter ZIPCO (325 aa).

3 helical membrane-spanning segments follow: residues 5–25 (TFLA…PAYI), 46–66 (IASG…VIIL), and 74–94 (LYYI…TDIL). 2 N-linked (GlcNAc...) asparagine glycosylation sites follow: N106 and N160. 4 helical membrane passes run 179 to 199 (FFIV…MGSL), 239 to 259 (IYAW…IFSF), 264 to 284 (FVEI…SFNM), and 296 to 316 (HFIS…MILF).

The protein localises to the cytoplasmic vesicle membrane. Functionally, putative transporter for the divalent zinc and iron cations. The chain is Putative metal ion transporter ZIPCO from Plasmodium falciparum (isolate 3D7).